Consider the following 287-residue polypeptide: Flagellin (287 aa).

It belongs to the bacterial flagellin family.

It is found in the secreted. The protein resides in the bacterial flagellum. Functionally, flagellin is the subunit protein which polymerizes to form the filaments of bacterial flagella. This is Flagellin (flaA) from Listeria innocua serovar 6a (strain ATCC BAA-680 / CLIP 11262).